A 1036-amino-acid chain; its full sequence is ADAMTS-like protein 4 (1036 aa).

The signal sequence occupies residues 1–24 (MESWLGRLWLCMMLLLPLPQPCQD). The TSP type-1 1 domain maps to 47-91 (GPWGRWASCSQPCGVGVQRRSRTCELHPALPLPPRPPRHPEAHRP). Disordered stretches follow at residues 73–149 (HPAL…IKPG) and 163–308 (HRSR…WLPL). Basic residues predominate over residues 163–173 (HRSRRHPHRPG). Positions 215 to 253 (TPRSGTAQTEVLPRTSSAPSYTGTPAPTSSFGDSRSFQG) are enriched in polar residues. Residues Asn-454 and Asn-737 are each glycosylated (N-linked (GlcNAc...) asparagine). TSP type-1 domains are found at residues 687–748 (CPPY…HLCG), 750–804 (WEIS…DMGP), 805–871 (CTTA…GPCE), 872–931 (RTWR…QGQA), and 932–988 (CEDK…QPCN). The PLAC domain occupies 991-1028 (PDDQCKDSSPHCPLVVQARLCVYPYYTTTCCRSCAHVL).

In terms of assembly, interacts with CTSB. Interacts with FBN1. Post-translationally, glycosylated. Can be O-fucosylated by POFUT2 on a serine or a threonine residue found within the consensus sequence C1-X(2)-(S/T)-C2-G of the TSP type-1 repeat domains where C1 and C2 are the first and second cysteine residue of the repeat, respectively. Fucosylated repeats can then be further glycosylated by the addition of a beta-1,3-glucose residue by the glucosyltransferase, B3GALTL. Fucosylation mediates the efficient secretion of ADAMTS family members. Can also be C-glycosylated with one or two mannose molecules on tryptophan residues within the consensus sequence W-X-X-W of the TPRs, and N-glycosylated. These other glycosylations can also facilitate secretion. As to expression, widely expressed in a range of tissues. Especially prevalent in brain, spinal cord, muscle, lung and heart.

The protein localises to the secreted. The protein resides in the extracellular space. It localises to the extracellular matrix. Its function is as follows. Positive regulation of apoptosis. May facilitate FBN1 microfibril biogenesis. The chain is ADAMTS-like protein 4 from Mus musculus (Mouse).